The primary structure comprises 120 residues: Small ribosomal subunit protein uS13 (120 aa).

A disordered region spans residues 97 to 120 (PVRGQRTKTNARTRKGKKKTVGAK).

This sequence belongs to the universal ribosomal protein uS13 family. In terms of assembly, part of the 30S ribosomal subunit. Forms a loose heterodimer with protein S19. Forms two bridges to the 50S subunit in the 70S ribosome.

In terms of biological role, located at the top of the head of the 30S subunit, it contacts several helices of the 16S rRNA. In the 70S ribosome it contacts the 23S rRNA (bridge B1a) and protein L5 of the 50S subunit (bridge B1b), connecting the 2 subunits; these bridges are implicated in subunit movement. Contacts the tRNAs in the A and P-sites. This is Small ribosomal subunit protein uS13 from Nitratiruptor sp. (strain SB155-2).